Consider the following 372-residue polypeptide: Glutamate 5-kinase (372 aa).

ATP is bound at residue Lys-14. Residues Ser-54, Asp-141, and Asn-153 each contribute to the substrate site. 173 to 174 (TD) contributes to the ATP binding site. Positions 280 to 358 (AGAVVLDNGA…ADIAAILGFV (79 aa)) constitute a PUA domain.

The protein belongs to the glutamate 5-kinase family.

The protein localises to the cytoplasm. The catalysed reaction is L-glutamate + ATP = L-glutamyl 5-phosphate + ADP. It functions in the pathway amino-acid biosynthesis; L-proline biosynthesis; L-glutamate 5-semialdehyde from L-glutamate: step 1/2. Its function is as follows. Catalyzes the transfer of a phosphate group to glutamate to form L-glutamate 5-phosphate. The polypeptide is Glutamate 5-kinase (Janthinobacterium sp. (strain Marseille) (Minibacterium massiliensis)).